We begin with the raw amino-acid sequence, 301 residues long: Lysozyme-like protein 3 (301 aa).

Residues 1–15 form the signal peptide; the sequence is MKLFALLVSITLCYS. Residues 64-282 enclose the Ch-type lysozyme domain; the sequence is HAYSVDISFH…HLSQIVHFST (219 aa).

The protein belongs to the glycosyl hydrolase 25 family.

In terms of biological role, plays a role in the stress response to heavy metals such as copper, probably in a kgb-1-dependent manner. In Caenorhabditis elegans, this protein is Lysozyme-like protein 3.